The chain runs to 336 residues: GTP 3',8-cyclase (336 aa).

The Radical SAM core domain occupies 17-238 (GFSRRFHYLR…WTQQNRNLTD (222 aa)). Arginine 26 lines the GTP pocket. [4Fe-4S] cluster is bound by residues cysteine 33 and cysteine 37. S-adenosyl-L-methionine is bound at residue tyrosine 39. Cysteine 40 serves as a coordination point for [4Fe-4S] cluster. Residue arginine 75 participates in GTP binding. Glycine 79 serves as a coordination point for S-adenosyl-L-methionine. Threonine 106 provides a ligand contact to GTP. An S-adenosyl-L-methionine-binding site is contributed by serine 130. A GTP-binding site is contributed by lysine 167. An S-adenosyl-L-methionine-binding site is contributed by methionine 201. [4Fe-4S] cluster is bound by residues cysteine 264 and cysteine 267. GTP is bound at residue 269 to 271 (RLR). Residue cysteine 281 coordinates [4Fe-4S] cluster.

It belongs to the radical SAM superfamily. MoaA family. As to quaternary structure, monomer and homodimer. [4Fe-4S] cluster is required as a cofactor.

The enzyme catalyses GTP + AH2 + S-adenosyl-L-methionine = (8S)-3',8-cyclo-7,8-dihydroguanosine 5'-triphosphate + 5'-deoxyadenosine + L-methionine + A + H(+). It participates in cofactor biosynthesis; molybdopterin biosynthesis. In terms of biological role, catalyzes the cyclization of GTP to (8S)-3',8-cyclo-7,8-dihydroguanosine 5'-triphosphate. This is GTP 3',8-cyclase from Tolumonas auensis (strain DSM 9187 / NBRC 110442 / TA 4).